A 464-amino-acid chain; its full sequence is MPANDFVSPDSIRAQFSAAMSLMYKQEVPLYGTLLELVSEINQQVMAQQPEVAEALRWTGEIERLDQERHGAIRVGTAEELATIARLFAVMGMQPVGYYDLSSAGVPVHSTAFRAVHEQSLHVSPFRVFTSLLRLELIDNPQLRELAQSILAKRQIFTSRALELIAQCEREGGLDAADAETFVQEALHTFRWHQDATVTAEQYQQLHDQHRLIADVVAFKGPHINHLTPRTLDIDAIQLGMPAKGIPPKAVVEGPPTRRHPILLRQTSFKALQETVAFRDQQGREGSHTARFGEIEQRGAALTPKGRQLYDKLLDATRVALGGAPAEANAERYMALLQANFAEFPDDLAQMREQGLAYFRYFATEKGLAARDQEGRPTTLQGLIDAGHVHFEALVYEDFLPVSAAGIFQSNLGDDAQAEYGSNANREAFEAALGLQVQDELALYAQSERRSLQACAQALNLGSM.

The 2-oxoadipate site is built by histidine 70, arginine 74, and histidine 226. Position 70 (histidine 70) interacts with Fe(2+). Residues histidine 226 and glutamate 294 each coordinate Fe(2+). Valine 402 serves as a coordination point for 2-oxoadipate.

The protein belongs to the 2-oxoadipate dioxygenase/decarboxylase family. Requires Fe(2+) as cofactor.

It carries out the reaction 2-oxoadipate + O2 = (R)-2-hydroxyglutarate + CO2. It participates in amino-acid degradation. Inhibited by EDTA. Catalyzes the decarboxylation and hydroxylation of 2-oxoadipate (2OA) to form D-2-hydroxyglutarate (D-2-HGA). Is specific for 2-oxoadipate. Is involved in a D-lysine catabolic pathway. The sequence is that of 2-oxoadipate dioxygenase/decarboxylase from Pseudomonas putida (strain ATCC 47054 / DSM 6125 / CFBP 8728 / NCIMB 11950 / KT2440).